We begin with the raw amino-acid sequence, 490 residues long: Protein nucleotidyltransferase YdiU (490 aa).

Glycine 94, glycine 96, arginine 97, lysine 117, aspartate 129, glycine 130, arginine 180, and arginine 187 together coordinate ATP. Aspartate 256 functions as the Proton acceptor in the catalytic mechanism. Mg(2+) is bound by residues asparagine 257 and aspartate 266. Aspartate 266 contributes to the ATP binding site.

Belongs to the SELO family. Mg(2+) serves as cofactor. The cofactor is Mn(2+).

It catalyses the reaction L-seryl-[protein] + ATP = 3-O-(5'-adenylyl)-L-seryl-[protein] + diphosphate. The catalysed reaction is L-threonyl-[protein] + ATP = 3-O-(5'-adenylyl)-L-threonyl-[protein] + diphosphate. It carries out the reaction L-tyrosyl-[protein] + ATP = O-(5'-adenylyl)-L-tyrosyl-[protein] + diphosphate. The enzyme catalyses L-histidyl-[protein] + UTP = N(tele)-(5'-uridylyl)-L-histidyl-[protein] + diphosphate. It catalyses the reaction L-seryl-[protein] + UTP = O-(5'-uridylyl)-L-seryl-[protein] + diphosphate. The catalysed reaction is L-tyrosyl-[protein] + UTP = O-(5'-uridylyl)-L-tyrosyl-[protein] + diphosphate. In terms of biological role, nucleotidyltransferase involved in the post-translational modification of proteins. It can catalyze the addition of adenosine monophosphate (AMP) or uridine monophosphate (UMP) to a protein, resulting in modifications known as AMPylation and UMPylation. This is Protein nucleotidyltransferase YdiU from Clostridium beijerinckii (strain ATCC 51743 / NCIMB 8052) (Clostridium acetobutylicum).